The following is a 67-amino-acid chain: Conotoxin VnMMSK-03 (67 aa).

The signal sequence occupies residues methionine 1–alanine 20. Residues leucine 21–valine 50 constitute a propeptide that is removed on maturation. 3 disulfide bridges follow: cysteine 53–cysteine 65, cysteine 54–cysteine 61, and cysteine 58–cysteine 64. Residue proline 63 is modified to 4-hydroxyproline.

The protein belongs to the conotoxin M superfamily. Expressed by the venom duct.

The protein resides in the secreted. This Conus ventricosus (Mediterranean cone) protein is Conotoxin VnMMSK-03.